Here is a 415-residue protein sequence, read N- to C-terminus: Peptide chain release factor subunit 1-1 (415 aa).

Belongs to the eukaryotic release factor 1 family. In terms of assembly, heterodimer of two subunits, one of which binds GTP.

The protein resides in the cytoplasm. In terms of biological role, directs the termination of nascent peptide synthesis (translation) in response to the termination codons UAA, UAG and UGA. This is Peptide chain release factor subunit 1-1 from Methanosarcina acetivorans (strain ATCC 35395 / DSM 2834 / JCM 12185 / C2A).